Consider the following 72-residue polypeptide: Cell division protein ZapB (72 aa).

Positions 1–71 (MSLEILDQLE…IRSLLGKFDN (71 aa)) form a coiled coil.

The protein belongs to the ZapB family. As to quaternary structure, homodimer. The ends of the coiled-coil dimer bind to each other, forming polymers. Interacts with FtsZ.

The protein localises to the cytoplasm. In terms of biological role, non-essential, abundant cell division factor that is required for proper Z-ring formation. It is recruited early to the divisome by direct interaction with FtsZ, stimulating Z-ring assembly and thereby promoting cell division earlier in the cell cycle. Its recruitment to the Z-ring requires functional FtsA or ZipA. The protein is Cell division protein ZapB of Haemophilus influenzae (strain 86-028NP).